The following is a 218-amino-acid chain: NAD(P)H-quinone oxidoreductase subunit I (218 aa).

4Fe-4S ferredoxin-type domains follow at residues 55–84 and 95–124; these read GRIH…VDWV and RNYS…MTEE. 8 residues coordinate [4Fe-4S] cluster: Cys-64, Cys-67, Cys-70, Cys-74, Cys-104, Cys-107, Cys-110, and Cys-114. Residues 169–218 are disordered; it reads MDPHELPANQQRAGKLPSQIIKELQAEKSEEKGNNNSSDIVPNKLNSTNK. Residues 192–201 are compositionally biased toward basic and acidic residues; the sequence is LQAEKSEEKG. Polar residues predominate over residues 202–218; sequence NNNSSDIVPNKLNSTNK.

Belongs to the complex I 23 kDa subunit family. In terms of assembly, NDH-1 is composed of at least 11 different subunits. It depends on [4Fe-4S] cluster as a cofactor.

Its subcellular location is the cellular thylakoid membrane. The enzyme catalyses a plastoquinone + NADH + (n+1) H(+)(in) = a plastoquinol + NAD(+) + n H(+)(out). The catalysed reaction is a plastoquinone + NADPH + (n+1) H(+)(in) = a plastoquinol + NADP(+) + n H(+)(out). In terms of biological role, NDH-1 shuttles electrons from an unknown electron donor, via FMN and iron-sulfur (Fe-S) centers, to quinones in the respiratory and/or the photosynthetic chain. The immediate electron acceptor for the enzyme in this species is believed to be plastoquinone. Couples the redox reaction to proton translocation, and thus conserves the redox energy in a proton gradient. This Prochlorococcus marinus (strain NATL1A) protein is NAD(P)H-quinone oxidoreductase subunit I.